The sequence spans 314 residues: Ribosomal RNA small subunit methyltransferase H (314 aa).

S-adenosyl-L-methionine is bound by residues 34-36 (GGH), D53, F82, D103, and Q110.

This sequence belongs to the methyltransferase superfamily. RsmH family.

The protein resides in the cytoplasm. The enzyme catalyses cytidine(1402) in 16S rRNA + S-adenosyl-L-methionine = N(4)-methylcytidine(1402) in 16S rRNA + S-adenosyl-L-homocysteine + H(+). Specifically methylates the N4 position of cytidine in position 1402 (C1402) of 16S rRNA. The protein is Ribosomal RNA small subunit methyltransferase H of Levilactobacillus brevis (strain ATCC 367 / BCRC 12310 / CIP 105137 / JCM 1170 / LMG 11437 / NCIMB 947 / NCTC 947) (Lactobacillus brevis).